Reading from the N-terminus, the 234-residue chain is 2-C-methyl-D-erythritol 4-phosphate cytidylyltransferase (234 aa).

The protein belongs to the IspD/TarI cytidylyltransferase family. IspD subfamily.

The enzyme catalyses 2-C-methyl-D-erythritol 4-phosphate + CTP + H(+) = 4-CDP-2-C-methyl-D-erythritol + diphosphate. It participates in isoprenoid biosynthesis; isopentenyl diphosphate biosynthesis via DXP pathway; isopentenyl diphosphate from 1-deoxy-D-xylulose 5-phosphate: step 2/6. Catalyzes the formation of 4-diphosphocytidyl-2-C-methyl-D-erythritol from CTP and 2-C-methyl-D-erythritol 4-phosphate (MEP). The chain is 2-C-methyl-D-erythritol 4-phosphate cytidylyltransferase from Pseudomonas aeruginosa (strain UCBPP-PA14).